The primary structure comprises 276 residues: 2,3,4,5-tetrahydropyridine-2,6-dicarboxylate N-succinyltransferase (276 aa).

Substrate-binding residues include R107 and D144.

Belongs to the transferase hexapeptide repeat family. As to quaternary structure, homotrimer.

The protein resides in the cytoplasm. The enzyme catalyses (S)-2,3,4,5-tetrahydrodipicolinate + succinyl-CoA + H2O = (S)-2-succinylamino-6-oxoheptanedioate + CoA. Its pathway is amino-acid biosynthesis; L-lysine biosynthesis via DAP pathway; LL-2,6-diaminopimelate from (S)-tetrahydrodipicolinate (succinylase route): step 1/3. The sequence is that of 2,3,4,5-tetrahydropyridine-2,6-dicarboxylate N-succinyltransferase from Gluconobacter oxydans (strain 621H) (Gluconobacter suboxydans).